A 373-amino-acid chain; its full sequence is Polygalacturonase (373 aa).

Positions 1–24 are cleaved as a signal peptide; it reads MVRNIVSRLCSQLFALPSSSLQER. An intrachain disulfide couples cysteine 27 to cysteine 42. Asparagine 65 and asparagine 94 each carry an N-linked (GlcNAc...) asparagine glycan. PbH1 repeat units follow at residues 136–158, 159–197, 198–219, 220–240, 249–270, 278–300, 312–333, and 345–369; these read TGNSKITNLNIQNWPVHCFDITG, SSQLTISGLILDNRAGDKPNAKSGSLPAAHNTDGFDISS, SDHVTLDNNHVYNQDDCVAVTS, GTNIVVSNMYCSGGHGLSIGS, VDGVQFLSSQVVNSQNGCRIKS, INNVTYQNIALTNISTYGVDVQQ, TNGVKISNIKFIKVTGTVASSA, and CSGFTFSGNAITGGGKTSSCNYPTN. Aspartate 212 acts as the Proton donor in catalysis. Cysteine 214 and cysteine 230 are joined by a disulfide. The active site involves histidine 234. Asparagine 280 and asparagine 290 each carry an N-linked (GlcNAc...) asparagine glycan. 2 cysteine pairs are disulfide-bonded: cysteine 340–cysteine 345 and cysteine 364–cysteine 371.

Belongs to the glycosyl hydrolase 28 family.

It localises to the secreted. The enzyme catalyses (1,4-alpha-D-galacturonosyl)n+m + H2O = (1,4-alpha-D-galacturonosyl)n + (1,4-alpha-D-galacturonosyl)m.. Functionally, involved in maceration and soft-rotting of plant tissue. Hydrolyzes the 1,4-alpha glycosidic bonds of de-esterified pectate in the smooth region of the plant cell wall. The polypeptide is Polygalacturonase (PGA) (Fusarium fujikuroi (Bakanae and foot rot disease fungus)).